We begin with the raw amino-acid sequence, 545 residues long: ATP synthase subunit alpha (545 aa).

174 to 181 (GDRKTGKT) contacts ATP.

It belongs to the ATPase alpha/beta chains family. In terms of assembly, F-type ATPases have 2 components, CF(1) - the catalytic core - and CF(0) - the membrane proton channel. CF(1) has five subunits: alpha(3), beta(3), gamma(1), delta(1), epsilon(1). CF(0) has three main subunits: a(1), b(2) and c(9-12). The alpha and beta chains form an alternating ring which encloses part of the gamma chain. CF(1) is attached to CF(0) by a central stalk formed by the gamma and epsilon chains, while a peripheral stalk is formed by the delta and b chains.

It localises to the cell membrane. The enzyme catalyses ATP + H2O + 4 H(+)(in) = ADP + phosphate + 5 H(+)(out). Produces ATP from ADP in the presence of a proton gradient across the membrane. The alpha chain is a regulatory subunit. This chain is ATP synthase subunit alpha, found in Cutibacterium acnes (strain DSM 16379 / KPA171202) (Propionibacterium acnes).